Here is a 91-residue protein sequence, read N- to C-terminus: Large ribosomal subunit protein uL23c (91 aa).

Belongs to the universal ribosomal protein uL23 family. In terms of assembly, part of the 50S ribosomal subunit.

The protein resides in the plastid. It is found in the chloroplast. In terms of biological role, binds to 23S rRNA. The chain is Large ribosomal subunit protein uL23c (rpl23) from Huperzia lucidula (Shining clubmoss).